The chain runs to 276 residues: SF-assemblin (276 aa).

Positions 1-31 (MSLRPFETPGGLSSLSPRRRDFSPTRPGTNG) are nonhelical region. The tract at residues 1–37 (MSLRPFETPGGLSSLSPRRRDFSPTRPGTNGPSAKLE) is disordered. The tract at residues 32–276 (PSAKLEHVTE…LQEGLKLVSA (245 aa)) is rod. A coiled-coil region spans residues 67–145 (LLQESLQRIE…LVRDERESRR (79 aa)).

The protein belongs to the SF-assemblin family.

The protein resides in the cytoplasm. It localises to the cytoskeleton. Its function is as follows. Major component of the striated microtubule-associated fibers (SMAFs; system-I-fibers). In Chlamydomonas reinhardtii (Chlamydomonas smithii), this protein is SF-assemblin.